The primary structure comprises 130 residues: uncharacterized protein (130 aa).

Residues 1-104 (MRPGSSPRAP…RGRWGLRGGP (104 aa)) are disordered. Residues 88–97 (RRQPGPQRGR) are compositionally biased toward low complexity.

This is an uncharacterized protein from Homo sapiens (Human).